The sequence spans 468 residues: ATP synthase subunit beta (468 aa).

ATP is bound at residue 155 to 162 (GGAGVGKT).

This sequence belongs to the ATPase alpha/beta chains family. F-type ATPases have 2 components, CF(1) - the catalytic core - and CF(0) - the membrane proton channel. CF(1) has five subunits: alpha(3), beta(3), gamma(1), delta(1), epsilon(1). CF(0) has three main subunits: a(1), b(2) and c(9-12). The alpha and beta chains form an alternating ring which encloses part of the gamma chain. CF(1) is attached to CF(0) by a central stalk formed by the gamma and epsilon chains, while a peripheral stalk is formed by the delta and b chains.

The protein localises to the cell membrane. The enzyme catalyses ATP + H2O + 4 H(+)(in) = ADP + phosphate + 5 H(+)(out). Produces ATP from ADP in the presence of a proton gradient across the membrane. The catalytic sites are hosted primarily by the beta subunits. This Streptococcus pneumoniae (strain ATCC BAA-255 / R6) protein is ATP synthase subunit beta.